The primary structure comprises 485 residues: Glutamyl-tRNA(Gln) amidotransferase subunit A (485 aa).

Active-site charge relay system residues include Lys74 and Ser149. Ser173 (acyl-ester intermediate) is an active-site residue.

Belongs to the amidase family. GatA subfamily. In terms of assembly, heterotrimer of A, B and C subunits.

The enzyme catalyses L-glutamyl-tRNA(Gln) + L-glutamine + ATP + H2O = L-glutaminyl-tRNA(Gln) + L-glutamate + ADP + phosphate + H(+). In terms of biological role, allows the formation of correctly charged Gln-tRNA(Gln) through the transamidation of misacylated Glu-tRNA(Gln) in organisms which lack glutaminyl-tRNA synthetase. The reaction takes place in the presence of glutamine and ATP through an activated gamma-phospho-Glu-tRNA(Gln). This chain is Glutamyl-tRNA(Gln) amidotransferase subunit A, found in Janthinobacterium sp. (strain Marseille) (Minibacterium massiliensis).